We begin with the raw amino-acid sequence, 127 residues long: Protein ApaG (127 aa).

The ApaG domain occupies aspartate 3–histidine 127.

This is Protein ApaG from Stenotrophomonas maltophilia (strain K279a).